Reading from the N-terminus, the 73-residue chain is U-scoloptoxin(22)-Cw1a (73 aa).

Residues 1 to 24 (MRRFVFLAFVLVLFVIANLDSSSA) form the signal peptide.

It belongs to the scoloptoxin-22 family. In terms of processing, contains 1 disulfide bond. Expressed by the venom gland.

Its subcellular location is the secreted. This chain is U-scoloptoxin(22)-Cw1a, found in Cormocephalus westwoodi (Westwood's green centipede).